The following is a 607-amino-acid chain: UvrABC system protein C (607 aa).

The region spanning 11-89 is the GIY-YIG domain; it reads CKPGVYRFED…IKEFAPPCNV (79 aa). The 36-residue stretch at 201 to 236 folds into the UVR domain; sequence SSLLESLKKKMLKASKNKEYEEAAILRDKIQAAQTV.

Belongs to the UvrC family. In terms of assembly, interacts with UvrB in an incision complex.

The protein localises to the cytoplasm. Functionally, the UvrABC repair system catalyzes the recognition and processing of DNA lesions. UvrC both incises the 5' and 3' sides of the lesion. The N-terminal half is responsible for the 3' incision and the C-terminal half is responsible for the 5' incision. The polypeptide is UvrABC system protein C (Tropheryma whipplei (strain TW08/27) (Whipple's bacillus)).